The chain runs to 336 residues: Ribosomal RNA large subunit methyltransferase F (336 aa).

The protein belongs to the methyltransferase superfamily. METTL16/RlmF family.

The protein localises to the cytoplasm. It carries out the reaction adenosine(1618) in 23S rRNA + S-adenosyl-L-methionine = N(6)-methyladenosine(1618) in 23S rRNA + S-adenosyl-L-homocysteine + H(+). Specifically methylates the adenine in position 1618 of 23S rRNA. In Yersinia pseudotuberculosis serotype I (strain IP32953), this protein is Ribosomal RNA large subunit methyltransferase F.